We begin with the raw amino-acid sequence, 111 residues long: Large ribosomal subunit protein uL22 (111 aa).

The protein belongs to the universal ribosomal protein uL22 family. In terms of assembly, part of the 50S ribosomal subunit.

Functionally, this protein binds specifically to 23S rRNA; its binding is stimulated by other ribosomal proteins, e.g. L4, L17, and L20. It is important during the early stages of 50S assembly. It makes multiple contacts with different domains of the 23S rRNA in the assembled 50S subunit and ribosome. In terms of biological role, the globular domain of the protein is located near the polypeptide exit tunnel on the outside of the subunit, while an extended beta-hairpin is found that lines the wall of the exit tunnel in the center of the 70S ribosome. The sequence is that of Large ribosomal subunit protein uL22 from Chlamydia trachomatis serovar L2 (strain ATCC VR-902B / DSM 19102 / 434/Bu).